A 409-amino-acid polypeptide reads, in one-letter code: N-acetylglucosamine-6-phosphate deacetylase (409 aa).

Residue Glu143 coordinates a divalent metal cation. 154–155 (AH) contributes to the substrate binding site. His211 and His232 together coordinate a divalent metal cation. Substrate contacts are provided by residues 235–236 (NA), Arg243, and 269–272 (DGIH). Asp294 functions as the Proton donor/acceptor in the catalytic mechanism. Residue 328-330 (LSG) participates in substrate binding.

This sequence belongs to the metallo-dependent hydrolases superfamily. NagA family. The cofactor is a divalent metal cation.

It carries out the reaction N-acetyl-D-glucosamine 6-phosphate + H2O = D-glucosamine 6-phosphate + acetate. Its pathway is amino-sugar metabolism; N-acetylneuraminate degradation. Functionally, hydrolyzes the N-glycolyl group from N-glycolylglucosamine 6-phosphate (GlcNGc-6-P) in the N-glycolylneuraminic acid (Neu5Gc) degradation pathway. The chain is N-acetylglucosamine-6-phosphate deacetylase (AMDHD2) from Bos taurus (Bovine).